An 876-amino-acid chain; its full sequence is Alanine--tRNA ligase (876 aa).

Zn(2+)-binding residues include His-568, His-572, Cys-670, and His-674.

This sequence belongs to the class-II aminoacyl-tRNA synthetase family. The cofactor is Zn(2+).

It localises to the cytoplasm. The catalysed reaction is tRNA(Ala) + L-alanine + ATP = L-alanyl-tRNA(Ala) + AMP + diphosphate. Catalyzes the attachment of alanine to tRNA(Ala) in a two-step reaction: alanine is first activated by ATP to form Ala-AMP and then transferred to the acceptor end of tRNA(Ala). Also edits incorrectly charged Ser-tRNA(Ala) and Gly-tRNA(Ala) via its editing domain. The protein is Alanine--tRNA ligase of Geotalea uraniireducens (strain Rf4) (Geobacter uraniireducens).